The chain runs to 1194 residues: F-box only protein 38 (1194 aa).

Positions Met30–Asp75 constitute an F-box domain. Residues Lys59–Arg119 form an interaction with KLF7 region. 3 consecutive short sequence motifs (nuclear export signal) follow at residues Leu194–Val201, Leu307–Ile316, and Leu451–Leu460. 4 disordered regions span residues Ala487–Asp529, Glu577–Ser776, Arg793–Ser879, and Lys896–Asp915. Over residues Asn493 to His510 the composition is skewed to low complexity. Position 592 is a phosphothreonine (Thr592). Phosphoserine occurs at positions 599, 601, and 607. Residues Ser599 to Glu609 are compositionally biased toward acidic residues. 2 stretches are compositionally biased toward basic and acidic residues: residues Arg622–Gly631 and Ile683–Asp701. The span at Ser705 to Ser728 shows a compositional bias: low complexity. Ser742 and Ser746 each carry phosphoserine. Positions Glu764–Ala774 are enriched in acidic residues. The segment covering Arg793 to Ser804 has biased composition (basic and acidic residues). Residues Ser855 to Glu867 show a composition bias toward polar residues. The span at Lys896–Thr906 shows a compositional bias: basic residues. The Nuclear localization signal signature appears at Lys902–Arg905.

As to quaternary structure, part of the SCF (SKP1-CUL1-F-box) E3 ubiquitin-protein ligase complex SCF(FBXO38) composed of CUL1, SKP1, RBX1 and FBXO38. Interacts with KLF7. Interacts with PDCD1/PD-1. Expressed at high levels in embryo (developing brain, spinal cord, branchial arms and limbs). Widely expressed at low levels in adult tissues, with highest expression in testis. Expressed in postmeiotic spermatids.

The protein resides in the cytoplasm. Its subcellular location is the cytosol. It localises to the nucleus. It participates in protein modification; protein ubiquitination. Its function is as follows. Substrate recognition component of a SCF (SKP1-CUL1-F-box protein) E3 ubiquitin-protein ligase complex which mediates the ubiquitination and subsequent proteasomal degradation of PDCD1/PD-1, thereby regulating T-cells-mediated immunity. Required for anti-tumor activity of T-cells by promoting the degradation of PDCD1/PD-1; the PDCD1-mediated inhibitory pathway being exploited by tumors to attenuate anti-tumor immunity and facilitate tumor survival. May indirectly stimulate the activity of transcription factor KLF7, a regulator of neuronal differentiation, without promoting KLF7 ubiquitination. In Mus musculus (Mouse), this protein is F-box only protein 38.